The primary structure comprises 397 residues: tRNA-specific 2-thiouridylase MnmA (397 aa).

Residues 6-13 (AMSGGVDS) and Leu-32 contribute to the ATP site. Cys-101 serves as the catalytic Nucleophile. The cysteines at positions 101 and 199 are disulfide-linked. An ATP-binding site is contributed by Gly-125. The segment at 148-150 (KDQ) is interaction with tRNA. The Cysteine persulfide intermediate role is filled by Cys-199.

This sequence belongs to the MnmA/TRMU family.

It localises to the cytoplasm. The catalysed reaction is S-sulfanyl-L-cysteinyl-[protein] + uridine(34) in tRNA + AH2 + ATP = 2-thiouridine(34) in tRNA + L-cysteinyl-[protein] + A + AMP + diphosphate + H(+). Catalyzes the 2-thiolation of uridine at the wobble position (U34) of tRNA, leading to the formation of s(2)U34. The sequence is that of tRNA-specific 2-thiouridylase MnmA from Clavibacter sepedonicus (Clavibacter michiganensis subsp. sepedonicus).